A 74-amino-acid polypeptide reads, in one-letter code: Antimicrobial peptide 36.4 (74 aa).

An N-terminal signal peptide occupies residues 1-22 (MKVNVLLAVFLVVMVVTDHCHA). The residue at position 39 (K39) is a Lysine amide. The propeptide occupies 44–74 (LQMEARFQPQNKNYRKRELDLENLFTHMPDY).

The protein belongs to the non-disulfide-bridged peptide (NDBP) superfamily. Short antimicrobial peptide (group 4) family. Expressed by the venom gland.

It localises to the secreted. The protein localises to the target cell membrane. Cationic host defense peptide that have antibacterial activity by breaking membranes. Is more effective on Gram-positive than on Gram-negative bacteria. In Lychas mucronatus (Chinese swimming scorpion), this protein is Antimicrobial peptide 36.4.